The chain runs to 133 residues: Antifungal protein ginkbilobin-like protein 2 (133 aa).

An N-terminal signal peptide occupies residues 1 to 24; sequence MSMGSFGFALAVMVLAVLVASAAG. One can recognise a Gnk2-homologous domain in the interval 28 to 133; the sequence is TNLVSSACNG…CFIRYEQYSI (106 aa). Asparagine 36 provides a ligand contact to alpha-D-mannopyranose. Intrachain disulfides connect cysteine 87-cysteine 96 and cysteine 99-cysteine 124. The alpha-D-mannopyranose site is built by arginine 118 and glutamate 129.

In terms of biological role, exerts antifungal activity through its carbohydrate-binding specificity. This chain is Antifungal protein ginkbilobin-like protein 2, found in Picea glauca (White spruce).